The chain runs to 282 residues: Bifunctional protein FolD (282 aa).

NADP(+)-binding positions include 167-169 (GRS) and serine 192.

The protein belongs to the tetrahydrofolate dehydrogenase/cyclohydrolase family. Homodimer.

The enzyme catalyses (6R)-5,10-methylene-5,6,7,8-tetrahydrofolate + NADP(+) = (6R)-5,10-methenyltetrahydrofolate + NADPH. It catalyses the reaction (6R)-5,10-methenyltetrahydrofolate + H2O = (6R)-10-formyltetrahydrofolate + H(+). Its pathway is one-carbon metabolism; tetrahydrofolate interconversion. Functionally, catalyzes the oxidation of 5,10-methylenetetrahydrofolate to 5,10-methenyltetrahydrofolate and then the hydrolysis of 5,10-methenyltetrahydrofolate to 10-formyltetrahydrofolate. The chain is Bifunctional protein FolD from Acidobacterium capsulatum (strain ATCC 51196 / DSM 11244 / BCRC 80197 / JCM 7670 / NBRC 15755 / NCIMB 13165 / 161).